Consider the following 700-residue polypeptide: Elongation factor G (700 aa).

The region spanning 8–290 is the tr-type G domain; sequence ERYRNIGISA…AVVEYLPAPT (283 aa). Residues 17–24, 88–92, and 142–145 each bind GTP; these read AHIDAGKT, DTPGH, and NKMD.

Belongs to the TRAFAC class translation factor GTPase superfamily. Classic translation factor GTPase family. EF-G/EF-2 subfamily.

The protein localises to the cytoplasm. Its function is as follows. Catalyzes the GTP-dependent ribosomal translocation step during translation elongation. During this step, the ribosome changes from the pre-translocational (PRE) to the post-translocational (POST) state as the newly formed A-site-bound peptidyl-tRNA and P-site-bound deacylated tRNA move to the P and E sites, respectively. Catalyzes the coordinated movement of the two tRNA molecules, the mRNA and conformational changes in the ribosome. The protein is Elongation factor G of Haemophilus influenzae (strain 86-028NP).